Reading from the N-terminus, the 288-residue chain is ATP synthase gamma chain (288 aa).

This sequence belongs to the ATPase gamma chain family. F-type ATPases have 2 components, CF(1) - the catalytic core - and CF(0) - the membrane proton channel. CF(1) has five subunits: alpha(3), beta(3), gamma(1), delta(1), epsilon(1). CF(0) has three main subunits: a, b and c.

It localises to the cell membrane. Its function is as follows. Produces ATP from ADP in the presence of a proton gradient across the membrane. The gamma chain is believed to be important in regulating ATPase activity and the flow of protons through the CF(0) complex. This chain is ATP synthase gamma chain, found in Staphylococcus aureus (strain bovine RF122 / ET3-1).